A 102-amino-acid polypeptide reads, in one-letter code: Gastrin/cholecystokinin-like peptide (102 aa).

The N-terminal stretch at 1-20 (MDKKVCVSILLAMLAIAALC) is a signal peptide. Residues 21–45 (RPMTELESARHGAQRKNSISDVSRR) constitute a propeptide that is removed on maturation. A Sulfotyrosine modification is found at Tyr-86. Phe-92 carries the phenylalanine amide modification. Residues 96–102 (SSEVTES) constitute a propeptide that is removed on maturation.

Belongs to the gastrin/cholecystokinin family. In terms of tissue distribution, expressed in antrum, duodenum, colon, pancreas, brain and testis. No expression found in kidney, lung, liver, skin or distal two-thirds of small intestine. In the brain, strongly expressed in the pituitary gland with moderate expression in the neural lobe, brain stem and hypothalamus.

The protein localises to the secreted. In terms of biological role, may control digestion processes. The sequence is that of Gastrin/cholecystokinin-like peptide (GAST) from Aquarana catesbeiana (American bullfrog).